The chain runs to 321 residues: Lipoyl synthase (321 aa).

The [4Fe-4S] cluster site is built by Cys68, Cys73, Cys79, Cys94, Cys98, Cys101, and Ser308. Residues 80–297 enclose the Radical SAM core domain; sequence FNHGTATFMI…RVFAEEIGFT (218 aa).

The protein belongs to the radical SAM superfamily. Lipoyl synthase family. Requires [4Fe-4S] cluster as cofactor.

The protein localises to the cytoplasm. It catalyses the reaction [[Fe-S] cluster scaffold protein carrying a second [4Fe-4S](2+) cluster] + N(6)-octanoyl-L-lysyl-[protein] + 2 oxidized [2Fe-2S]-[ferredoxin] + 2 S-adenosyl-L-methionine + 4 H(+) = [[Fe-S] cluster scaffold protein] + N(6)-[(R)-dihydrolipoyl]-L-lysyl-[protein] + 4 Fe(3+) + 2 hydrogen sulfide + 2 5'-deoxyadenosine + 2 L-methionine + 2 reduced [2Fe-2S]-[ferredoxin]. The protein operates within protein modification; protein lipoylation via endogenous pathway; protein N(6)-(lipoyl)lysine from octanoyl-[acyl-carrier-protein]: step 2/2. Its function is as follows. Catalyzes the radical-mediated insertion of two sulfur atoms into the C-6 and C-8 positions of the octanoyl moiety bound to the lipoyl domains of lipoate-dependent enzymes, thereby converting the octanoylated domains into lipoylated derivatives. This chain is Lipoyl synthase, found in Shewanella woodyi (strain ATCC 51908 / MS32).